A 454-amino-acid chain; its full sequence is Arginine biosynthesis bifunctional protein ArgJ, mitochondrial (454 aa).

Residues Thr-184, Lys-213, Thr-224, Glu-311, Asn-449, and Thr-454 each contribute to the substrate site. The active-site Nucleophile is the Thr-224.

This sequence belongs to the ArgJ family. As to quaternary structure, heterodimer of an alpha and a beta chain. In terms of processing, the alpha and beta chains are autoproteolytically processed from a single precursor protein within the mitochondrion.

The protein localises to the mitochondrion matrix. The catalysed reaction is N(2)-acetyl-L-ornithine + L-glutamate = N-acetyl-L-glutamate + L-ornithine. It catalyses the reaction L-glutamate + acetyl-CoA = N-acetyl-L-glutamate + CoA + H(+). The protein operates within amino-acid biosynthesis; L-arginine biosynthesis; L-ornithine and N-acetyl-L-glutamate from L-glutamate and N(2)-acetyl-L-ornithine (cyclic): step 1/1. It functions in the pathway amino-acid biosynthesis; L-arginine biosynthesis; N(2)-acetyl-L-ornithine from L-glutamate: step 1/4. Functionally, catalyzes two activities which are involved in the cyclic version of arginine biosynthesis: the synthesis of acetylglutamate from glutamate and acetyl-CoA, and of ornithine by transacetylation between acetylornithine and glutamate. This Aspergillus clavatus (strain ATCC 1007 / CBS 513.65 / DSM 816 / NCTC 3887 / NRRL 1 / QM 1276 / 107) protein is Arginine biosynthesis bifunctional protein ArgJ, mitochondrial.